A 101-amino-acid polypeptide reads, in one-letter code: Urease subunit beta (101 aa).

Belongs to the urease beta subunit family. Heterotrimer of UreA (gamma), UreB (beta) and UreC (alpha) subunits. Three heterotrimers associate to form the active enzyme.

Its subcellular location is the cytoplasm. It catalyses the reaction urea + 2 H2O + H(+) = hydrogencarbonate + 2 NH4(+). It functions in the pathway nitrogen metabolism; urea degradation; CO(2) and NH(3) from urea (urease route): step 1/1. The sequence is that of Urease subunit beta from Haemophilus influenzae (strain 86-028NP).